The primary structure comprises 91 residues: Succinate dehydrogenase assembly factor 1A, mitochondrial (91 aa).

This sequence belongs to the complex I LYR family. SDHAF1 subfamily. As to quaternary structure, interacts with the iron-sulfur protein subunit within the SDH catalytic dimer.

It localises to the mitochondrion matrix. In terms of biological role, plays an essential role in the assembly of succinate dehydrogenase (SDH), an enzyme complex (also referred to as respiratory complex II) that is a component of both the tricarboxylic acid (TCA) cycle and the mitochondrial electron transport chain, and which couples the oxidation of succinate to fumarate with the reduction of ubiquinone (coenzyme Q) to ubiquinol. Promotes maturation of the iron-sulfur protein subunit of the SDH catalytic dimer, protecting it from the deleterious effects of oxidants. May act together with SDHAF3. The polypeptide is Succinate dehydrogenase assembly factor 1A, mitochondrial (Dictyostelium discoideum (Social amoeba)).